A 482-amino-acid chain; its full sequence is tRNA sulfurtransferase (482 aa).

Residues 61 to 165 form the THUMP domain; that stretch reads DQILAILMQT…YDHLHQVLHR (105 aa). Residues 183–184, Lys265, Gly287, and Gln296 contribute to the ATP site; that span reads LI. Cys344 and Cys456 form a disulfide bridge. A Rhodanese domain is found at 404 to 482; that stretch reads IGDGAIVLDI…GYGNIKVYRP (79 aa). Cys456 (cysteine persulfide intermediate) is an active-site residue.

It belongs to the ThiI family.

It localises to the cytoplasm. The catalysed reaction is [ThiI sulfur-carrier protein]-S-sulfanyl-L-cysteine + a uridine in tRNA + 2 reduced [2Fe-2S]-[ferredoxin] + ATP + H(+) = [ThiI sulfur-carrier protein]-L-cysteine + a 4-thiouridine in tRNA + 2 oxidized [2Fe-2S]-[ferredoxin] + AMP + diphosphate. It catalyses the reaction [ThiS sulfur-carrier protein]-C-terminal Gly-Gly-AMP + S-sulfanyl-L-cysteinyl-[cysteine desulfurase] + AH2 = [ThiS sulfur-carrier protein]-C-terminal-Gly-aminoethanethioate + L-cysteinyl-[cysteine desulfurase] + A + AMP + 2 H(+). Its pathway is cofactor biosynthesis; thiamine diphosphate biosynthesis. Its function is as follows. Catalyzes the ATP-dependent transfer of a sulfur to tRNA to produce 4-thiouridine in position 8 of tRNAs, which functions as a near-UV photosensor. Also catalyzes the transfer of sulfur to the sulfur carrier protein ThiS, forming ThiS-thiocarboxylate. This is a step in the synthesis of thiazole, in the thiamine biosynthesis pathway. The sulfur is donated as persulfide by IscS. The protein is tRNA sulfurtransferase of Photobacterium profundum (strain SS9).